The chain runs to 74 residues: Exodeoxyribonuclease 7 small subunit (74 aa).

This sequence belongs to the XseB family. Heterooligomer composed of large and small subunits.

The protein resides in the cytoplasm. The enzyme catalyses Exonucleolytic cleavage in either 5'- to 3'- or 3'- to 5'-direction to yield nucleoside 5'-phosphates.. Bidirectionally degrades single-stranded DNA into large acid-insoluble oligonucleotides, which are then degraded further into small acid-soluble oligonucleotides. In Ruthia magnifica subsp. Calyptogena magnifica, this protein is Exodeoxyribonuclease 7 small subunit.